Reading from the N-terminus, the 421-residue chain is 4-hydroxy-3-methylbut-2-en-1-yl diphosphate synthase (flavodoxin) (421 aa).

[4Fe-4S] cluster contacts are provided by Cys-311, Cys-314, Cys-357, and Glu-364.

Belongs to the IspG family. [4Fe-4S] cluster is required as a cofactor.

It carries out the reaction (2E)-4-hydroxy-3-methylbut-2-enyl diphosphate + oxidized [flavodoxin] + H2O + 2 H(+) = 2-C-methyl-D-erythritol 2,4-cyclic diphosphate + reduced [flavodoxin]. It functions in the pathway isoprenoid biosynthesis; isopentenyl diphosphate biosynthesis via DXP pathway; isopentenyl diphosphate from 1-deoxy-D-xylulose 5-phosphate: step 5/6. Its function is as follows. Converts 2C-methyl-D-erythritol 2,4-cyclodiphosphate (ME-2,4cPP) into 1-hydroxy-2-methyl-2-(E)-butenyl 4-diphosphate. The protein is 4-hydroxy-3-methylbut-2-en-1-yl diphosphate synthase (flavodoxin) of Stenotrophomonas maltophilia (strain K279a).